The primary structure comprises 387 residues: MATTKSVLVLIFMILATTSSTFATLGEMVTVLSVDGGGIKGIIPGIILEFLEGQLQKMDNNADARLADYFDVIGGTSTGGLLTAMITTPNENNRPFAAAKDIVPFYFQHGPHIFNSSTGQFFGPKYDGKYLMQVPQEKLGETRVHQALTEVAISSFDIKTNKPVIFTKSNLAKSPELDAKMSDICYSTAAAPTYFPPHYFATNTSNGDKYEFNLVDGAVATVADPALLSVSVATRRAEEDPAFASIRSLNYKQLLLLSLGTGTNSEFDKTHTAQETAKWGALQWMLVIQQMTEAASSYMTDYYLSTVFQDLHSQNNYLRVQENALTGTTTKADDASEANMELLVQVGETLLKKPVSKDSPETYEEALKRFAKLLSDRKKLRANKASY.

A signal peptide spans 1–23 (MATTKSVLVLIFMILATTSSTFA). The 199-residue stretch at 32–230 (LSVDGGGIKG…TVADPALLSV (199 aa)) folds into the PNPLA domain. Positions 36–41 (GGGIKG) match the GXGXXG motif. Residues 75 to 79 (GTSTG) carry the GXSXG motif. Ser77 serves as the catalytic Nucleophile. Asn115 and Asn203 each carry an N-linked (GlcNAc...) asparagine glycan. Asp216 functions as the Proton acceptor in the catalytic mechanism. The DGA/G signature appears at 216-218 (DGA). Residues 361–385 (ETYEEALKRFAKLLSDRKKLRANKA) adopt a coiled-coil conformation.

This sequence belongs to the patatin family. As to expression, tuber.

Its subcellular location is the vacuole. Probable lipolytic acyl hydrolase (LAH), an activity which is thought to be involved in the response of tubers to pathogens. The sequence is that of Patatin-13 from Solanum tuberosum (Potato).